We begin with the raw amino-acid sequence, 248 residues long: Probable transcriptional regulatory protein BOV_1660 (248 aa).

This sequence belongs to the TACO1 family.

It is found in the cytoplasm. This chain is Probable transcriptional regulatory protein BOV_1660, found in Brucella ovis (strain ATCC 25840 / 63/290 / NCTC 10512).